Here is a 254-residue protein sequence, read N- to C-terminus: UPF0246 protein Fphi_1075 (254 aa).

It belongs to the UPF0246 family.

This is UPF0246 protein Fphi_1075 from Francisella philomiragia subsp. philomiragia (strain ATCC 25017 / CCUG 19701 / FSC 153 / O#319-036).